The sequence spans 243 residues: Pyridoxine 5'-phosphate synthase (243 aa).

Asn-9 contacts 3-amino-2-oxopropyl phosphate. 11-12 (DH) contacts 1-deoxy-D-xylulose 5-phosphate. 3-amino-2-oxopropyl phosphate is bound at residue Arg-20. The active-site Proton acceptor is the His-45. Arg-47 and His-52 together coordinate 1-deoxy-D-xylulose 5-phosphate. Glu-72 functions as the Proton acceptor in the catalytic mechanism. A 1-deoxy-D-xylulose 5-phosphate-binding site is contributed by Thr-102. Catalysis depends on His-193, which acts as the Proton donor. Residues Gly-194 and 215–216 (GH) contribute to the 3-amino-2-oxopropyl phosphate site.

This sequence belongs to the PNP synthase family. Homooctamer; tetramer of dimers.

Its subcellular location is the cytoplasm. It carries out the reaction 3-amino-2-oxopropyl phosphate + 1-deoxy-D-xylulose 5-phosphate = pyridoxine 5'-phosphate + phosphate + 2 H2O + H(+). It functions in the pathway cofactor biosynthesis; pyridoxine 5'-phosphate biosynthesis; pyridoxine 5'-phosphate from D-erythrose 4-phosphate: step 5/5. Functionally, catalyzes the complicated ring closure reaction between the two acyclic compounds 1-deoxy-D-xylulose-5-phosphate (DXP) and 3-amino-2-oxopropyl phosphate (1-amino-acetone-3-phosphate or AAP) to form pyridoxine 5'-phosphate (PNP) and inorganic phosphate. The chain is Pyridoxine 5'-phosphate synthase from Salmonella typhi.